The chain runs to 222 residues: Ribonuclease HII (222 aa).

The RNase H type-2 domain maps to Phe-32–Ser-222. Positions 38, 39, and 130 each coordinate a divalent metal cation.

It belongs to the RNase HII family. Mn(2+) is required as a cofactor. Mg(2+) serves as cofactor.

It localises to the cytoplasm. It carries out the reaction Endonucleolytic cleavage to 5'-phosphomonoester.. Endonuclease that specifically degrades the RNA of RNA-DNA hybrids. The polypeptide is Ribonuclease HII (Bartonella bacilliformis (strain ATCC 35685 / KC583 / Herrer 020/F12,63)).